Here is a 538-residue protein sequence, read N- to C-terminus: Zinc finger protein with KRAB and SCAN domains 3 (538 aa).

Ser42 is subject to Phosphoserine. In terms of domain architecture, SCAN box spans 46–128 (RERFRGFRYP…VLLEYLERQL (83 aa)). Residue Lys171 forms a Glycyl lysine isopeptide (Lys-Gly) (interchain with G-Cter in SUMO2) linkage. Thr207 carries the phosphothreonine modification. Residues 214–274 (LKVEDVALTL…PAEELPEKEH (61 aa)) form the KRAB domain. The segment covering 226–236 (EWTQQDSSQGN) has biased composition (polar residues). Residues 226-274 (EWTQQDSSQGNLCRDEKQENHGSLVSLGDEKQTKSRDLPPAEELPEKEH) are disordered. Residues 253-274 (GDEKQTKSRDLPPAEELPEKEH) show a composition bias toward basic and acidic residues. 5 C2H2-type zinc fingers span residues 314-336 (HICH…RRIH), 342-364 (YECE…QRVH), 370-392 (YECE…QRTH), 398-420 (YECD…HRIH), and 426-448 (YQCS…QRIH). Residue Thr449 is modified to Phosphothreonine. 2 consecutive C2H2-type zinc fingers follow at residues 480–502 (YKCN…QKIH) and 508–530 (YQCN…QRSH).

The protein belongs to the krueppel C2H2-type zinc-finger protein family.

Its subcellular location is the nucleus. It localises to the cytoplasm. In terms of biological role, transcriptional factor that binds to the consensus sequence 5'-[GT][AG][AGT]GGGG-3' and acts as a repressor of autophagy. Specifically represses expression of genes involved in autophagy and lysosome biogenesis/function such as MAP1LC3B, ULK1 or WIPI2. Associates with chromatin at the ITGB4 and VEGF promoters. Also acts as a transcription activator and promotes cancer cell progression and/or migration in various tumors and myelomas. This chain is Zinc finger protein with KRAB and SCAN domains 3 (ZKSCAN3), found in Homo sapiens (Human).